Here is a 966-residue protein sequence, read N- to C-terminus: Catenin alpha-2 (966 aa).

A compositionally biased stretch (basic and acidic residues) spans 924 to 940; that stretch reads PEKKPLVKREKPEEYQT. The tract at residues 924–952 is disordered; that stretch reads PEKKPLVKREKPEEYQTRVRRGSQKKHIS. Basic residues predominate over residues 941-951; it reads RVRRGSQKKHI.

It belongs to the vinculin/alpha-catenin family.

The protein localises to the cell membrane. It localises to the cytoplasm. The protein resides in the cytoskeleton. It is found in the cell junction. Its subcellular location is the adherens junction. The protein localises to the cell projection. It localises to the axon. The protein resides in the nucleus. May function as a linker between cadherin adhesion receptors and the cytoskeleton to regulate cell-cell adhesion and differentiation in the nervous system. The protein is Catenin alpha-2 (ctnna2) of Xenopus tropicalis (Western clawed frog).